Here is a 118-residue protein sequence, read N- to C-terminus: Ribonuclease P protein component (118 aa).

It belongs to the RnpA family. In terms of assembly, consists of a catalytic RNA component (M1 or rnpB) and a protein subunit.

The catalysed reaction is Endonucleolytic cleavage of RNA, removing 5'-extranucleotides from tRNA precursor.. In terms of biological role, RNaseP catalyzes the removal of the 5'-leader sequence from pre-tRNA to produce the mature 5'-terminus. It can also cleave other RNA substrates such as 4.5S RNA. The protein component plays an auxiliary but essential role in vivo by binding to the 5'-leader sequence and broadening the substrate specificity of the ribozyme. This is Ribonuclease P protein component from Petrotoga mobilis (strain DSM 10674 / SJ95).